The chain runs to 384 residues: Isoafricanol synthase (384 aa).

Mg(2+)-binding residues include Asp-95, Asn-245, Ser-249, and Glu-253.

This sequence belongs to the terpene synthase family. Mg(2+) serves as cofactor.

The enzyme catalyses (2E,6E)-farnesyl diphosphate + H2O = (+)-isoafricanol + diphosphate. Catalyzes the cyclization of farnesyl diphosphate (FPP) to isoafricanol. This is Isoafricanol synthase from Streptomyces violaceusniger (strain Tu 4113).